Reading from the N-terminus, the 91-residue chain is DNA-directed RNA polymerase subunit omega (91 aa).

This sequence belongs to the RNA polymerase subunit omega family. In terms of assembly, the RNAP catalytic core consists of 2 alpha, 1 beta, 1 beta' and 1 omega subunit. When a sigma factor is associated with the core the holoenzyme is formed, which can initiate transcription.

It catalyses the reaction RNA(n) + a ribonucleoside 5'-triphosphate = RNA(n+1) + diphosphate. In terms of biological role, promotes RNA polymerase assembly. Latches the N- and C-terminal regions of the beta' subunit thereby facilitating its interaction with the beta and alpha subunits. This is DNA-directed RNA polymerase subunit omega from Yersinia enterocolitica serotype O:8 / biotype 1B (strain NCTC 13174 / 8081).